The following is a 205-amino-acid chain: Urease accessory protein UreG (205 aa).

10 to 17 (GPVGSGKT) provides a ligand contact to GTP.

It belongs to the SIMIBI class G3E GTPase family. UreG subfamily. Homodimer. UreD, UreF and UreG form a complex that acts as a GTP-hydrolysis-dependent molecular chaperone, activating the urease apoprotein by helping to assemble the nickel containing metallocenter of UreC. The UreE protein probably delivers the nickel.

It is found in the cytoplasm. Functionally, facilitates the functional incorporation of the urease nickel metallocenter. This process requires GTP hydrolysis, probably effectuated by UreG. The chain is Urease accessory protein UreG from Corynebacterium urealyticum (strain ATCC 43042 / DSM 7109).